We begin with the raw amino-acid sequence, 93 residues long: DNA-directed RNA polymerase subunit omega (93 aa).

Belongs to the RNA polymerase subunit omega family. The RNAP catalytic core consists of 2 alpha, 1 beta, 1 beta' and 1 omega subunit. When a sigma factor is associated with the core the holoenzyme is formed, which can initiate transcription.

It catalyses the reaction RNA(n) + a ribonucleoside 5'-triphosphate = RNA(n+1) + diphosphate. Promotes RNA polymerase assembly. Latches the N- and C-terminal regions of the beta' subunit thereby facilitating its interaction with the beta and alpha subunits. The chain is DNA-directed RNA polymerase subunit omega from Shewanella loihica (strain ATCC BAA-1088 / PV-4).